The primary structure comprises 262 residues: Glutamine-binding protein (262 aa).

The signal sequence occupies residues 1–26; the sequence is MKRKTVWKIWITLALIALLSITALAG. Cys-27 is lipidated: N-palmitoyl cysteine. A lipid anchor (S-diacylglycerol cysteine) is attached at Cys-27.

Belongs to the bacterial solute-binding protein 3 family.

Its subcellular location is the cell membrane. Functionally, involved in glutamine-transport system. Interacts with the glutamine-transport system GlnPQ. This chain is Glutamine-binding protein (glnH), found in Geobacillus stearothermophilus (Bacillus stearothermophilus).